The sequence spans 408 residues: Argininosuccinate synthase (408 aa).

ATP contacts are provided by residues 11–19 (AYSGGLDTS) and Ala-38. Residues Tyr-91 and Ser-96 each coordinate L-citrulline. Gly-121 contacts ATP. Thr-123, Asn-127, and Asp-128 together coordinate L-aspartate. Asn-127 provides a ligand contact to L-citrulline. L-citrulline-binding residues include Arg-131, Ser-182, Ser-191, Glu-267, and Tyr-279.

Belongs to the argininosuccinate synthase family. Type 1 subfamily. As to quaternary structure, homotetramer.

Its subcellular location is the cytoplasm. The enzyme catalyses L-citrulline + L-aspartate + ATP = 2-(N(omega)-L-arginino)succinate + AMP + diphosphate + H(+). It functions in the pathway amino-acid biosynthesis; L-arginine biosynthesis; L-arginine from L-ornithine and carbamoyl phosphate: step 2/3. This Paracoccus denitrificans (strain Pd 1222) protein is Argininosuccinate synthase.